Here is a 476-residue protein sequence, read N- to C-terminus: ATP synthase subunit beta 2 (476 aa).

Position 160 to 167 (160 to 167 (GGAGVGKT)) interacts with ATP.

This sequence belongs to the ATPase alpha/beta chains family. In terms of assembly, F-type ATPases have 2 components, CF(1) - the catalytic core - and CF(0) - the membrane proton channel. CF(1) has five subunits: alpha(3), beta(3), gamma(1), delta(1), epsilon(1). CF(0) has four main subunits: a(1), b(1), b'(1) and c(9-12).

It is found in the cell inner membrane. It catalyses the reaction ATP + H2O + 4 H(+)(in) = ADP + phosphate + 5 H(+)(out). Produces ATP from ADP in the presence of a proton gradient across the membrane. The catalytic sites are hosted primarily by the beta subunits. This Bradyrhizobium sp. (strain BTAi1 / ATCC BAA-1182) protein is ATP synthase subunit beta 2.